Consider the following 381-residue polypeptide: S-adenosylmethionine synthase (381 aa).

ATP is bound at residue H15. D17 is a binding site for Mg(2+). Position 43 (E43) interacts with K(+). L-methionine is bound by residues E56 and Q99. A flexible loop region spans residues Q99–N109. ATP is bound by residues D164–K166, R230–F231, D239, R245–K246, and K266. An L-methionine-binding site is contributed by D239. K270 is an L-methionine binding site.

Belongs to the AdoMet synthase family. Homotetramer; dimer of dimers. Requires Mg(2+) as cofactor. The cofactor is K(+).

The protein localises to the cytoplasm. The catalysed reaction is L-methionine + ATP + H2O = S-adenosyl-L-methionine + phosphate + diphosphate. Its pathway is amino-acid biosynthesis; S-adenosyl-L-methionine biosynthesis; S-adenosyl-L-methionine from L-methionine: step 1/1. In terms of biological role, catalyzes the formation of S-adenosylmethionine (AdoMet) from methionine and ATP. The overall synthetic reaction is composed of two sequential steps, AdoMet formation and the subsequent tripolyphosphate hydrolysis which occurs prior to release of AdoMet from the enzyme. The sequence is that of S-adenosylmethionine synthase from Legionella jeonii.